Reading from the N-terminus, the 215-residue chain is Protein Thf1 (215 aa).

Residues 188–209 (IELVQETIAAERRKKERRQAEQ) are a coiled coil.

The protein belongs to the THF1 family.

May be involved in photosynthetic membrane biogenesis. This is Protein Thf1 from Synechococcus sp. (strain CC9902).